The sequence spans 147 residues: Putative pre-16S rRNA nuclease (147 aa).

It belongs to the YqgF nuclease family.

Its subcellular location is the cytoplasm. Functionally, could be a nuclease involved in processing of the 5'-end of pre-16S rRNA. This Ureaplasma parvum serovar 3 (strain ATCC 27815 / 27 / NCTC 11736) protein is Putative pre-16S rRNA nuclease.